Reading from the N-terminus, the 262-residue chain is Glycoprotein gp2 (262 aa).

The segment at 1–45 is disordered; sequence RRGSPQGGSHTTPHPDRLTPSPDDTYDDDTNHPNGRNNSIEIVPQ.

The protein resides in the virion membrane. Its function is as follows. Virulence factor. The sequence is that of Glycoprotein gp2 from Equus caballus (Horse).